A 113-amino-acid chain; its full sequence is AYACSFPPSEIPGSKECLAEALQKHQGFKKKSYALICAYLNYKEDAENYERAAEDFDSAVKCTGCKEGVDLHEGNPELIEEGFEKFLASLKIDRKALGSLCTLFQKLYAIPHN.

Y2 is subject to 2',4',5'-topaquinone. Positions 2–31 form a cross-link, lysine tyrosylquinone (Tyr-Lys); sequence YACSFPPSEIPGSKECLAEALQKHQGFKKK. Cystine bridges form between C4–C62, C17–C65, and C37–C101. An Aminomalonic acid (Ser); in chain B modification is found at S9. The segment at residues 17-65 is a cross-link (S-cysteinyl 3-(oxidosulfanyl)alanine (Cys-Cys); in chain B); that stretch reads CLAEALQKHQGFKKKSYALICAYLNYKEDAENYERAAEDFDSAVKCTGC. Positions 30 to 108 form a cross-link, lysine tyrosylquinone (Lys-Tyr); sequence KKSYALICAY…SLCTLFQKLY (79 aa). Position 65 is a cysteine sulfenic acid (-SOH); in chain B (C65). 2',4',5'-topaquinone is present on Y108. 2 residues coordinate Zn(2+): Y108 and H112. A 5'-tyrosyl-5'-aminotyrosine (Tyr-Tyr) (interchain with Y-108) cross-link involves residue Y108.

In terms of assembly, homodimer. The two chains, designated A and B, differ in their modifications, but not, it is thought, in their sequence. The cofactor is Zn(2+). Foam nest.

It is found in the secreted. The chain is Ranasmurfin from Polypedates leucomystax (Common tree frog).